The sequence spans 443 residues: GTPase Der (443 aa).

EngA-type G domains lie at 3-167 and 176-349; these read PVIA…PEEK and IKIA…QSIQ. GTP contacts are provided by residues 9–16, 56–60, 119–122, 182–189, 229–233, and 294–297; these read GRPNVGKS, DTGGL, NKAD, DTAGI, and NKWD. In terms of domain architecture, KH-like spans 350–434; that stretch reads QELTTGQLTR…PVHIKLKTDP (85 aa).

It belongs to the TRAFAC class TrmE-Era-EngA-EngB-Septin-like GTPase superfamily. EngA (Der) GTPase family. Associates with the 50S ribosomal subunit.

Functionally, GTPase that plays an essential role in the late steps of ribosome biogenesis. The chain is GTPase Der from Coxiella burnetii (strain CbuK_Q154) (Coxiella burnetii (strain Q154)).